Reading from the N-terminus, the 936-residue chain is MLRPEISSTSPSAPAVSPSSGETRSPQGPRYNFGLQETPQSRPSVQVVSASTCPGTSGAAGDRSSSSSSLPCPAPNSRPAQGSYFGNKRAYAENTVASNFTFGASSSSARDTNYPQTLKTPLSTGNPQRSGYKSWTPQVGYSASSSSAISAHSPSVIVAVVEGRGLARGEIGMASIDLKNPQIILSQFADNTTYAKVITKLKILSPLEIIMSNTACAVGNSTKLFTLITENFKNVNFTTIQRKYFNETKGLEYIEQLCIAEFSTVLMEVQSKYYCLAAVAALLKYVEFIQNSVYAPKSLKICFQGSEQTAMIDSSSAQNLELLINNQDYRNNHTLFGVLNYTKTPGGSRRLRSNILEPLVDIETINMRLDCVQELLQDEELFFGLQSVISRFLDTEQLLSVLVQIPKQDTVNAAESKITNLIYLKHTLELVDPLKIAMKNCNTPLLRAYYGSLEDKRFGIILEKIKTVINDDARYMKGCLNMRTQKCYAVRSNINEFLDIARRTYTEIVDDIAGMISQLGEKYSLPLRTSFSSARGFFIQMTTDCIALPSDQLPSEFIKISKVKNSYSFTSADLIKMNERCQESLREIYHMTYMIVCKLLSEIYEHIHCLYKLSDTVSMLDMLLSFAHACTLSDYVRPEFTDTLAIKQGWHPILEKISAEKPIANNTYVTEGSNFLIITGPNMSGKSTYLKQIALCQIMAQIGSYVPAEYSSFRIAKQIFTRISTDDDIETNSSTFMKEMKEIAYILHNANDKSLILIDELGRGTNTEEGIGICYAVCEYLLSLKAFTLFATHFLELCHIDALYPNVENMHFEVQHVKNTSRNKEAILYTYKLSKGLTEEKNYGLKAAEVSSLPPSIVLDAKEITTQITRQILQNQRSTPEMERQRAVYHLATRLVQTARNSQLDPDSLRIYLSNLKKKYKEDFPRTEQVPEKTEE.

2 disordered regions span residues 1-83 and 103-133; these read MLRP…AQGS and GASSSSARDTNYPQTLKTPLSTGNPQRSGYK. The segment covering 7 to 20 has biased composition (low complexity); sequence SSTSPSAPAVSPSS. Residues 35–55 are compositionally biased toward polar residues; it reads LQETPQSRPSVQVVSASTCPG. 680–687 lines the ATP pocket; it reads GPNMSGKS.

This sequence belongs to the DNA mismatch repair MutS family. In terms of assembly, heterooligomer of MSH4 and MSH5. Highly expressed in testis. Also expressed in the ovary.

The protein localises to the chromosome. Functionally, involved in meiotic recombination. Required for reciprocal recombination and proper segregation of homologous chromosomes at meiosis. This Homo sapiens (Human) protein is MutS protein homolog 4 (MSH4).